The following is a 218-amino-acid chain: Glycerol-3-phosphate acyltransferase (218 aa).

The next 6 membrane-spanning stretches (helical) occupy residues 3-23 (FAIF…YWIA), 53-73 (GFPV…LSGI), 82-102 (FQLA…FLGF), 112-132 (LGVF…VFLV), 142-162 (IGSI…SILL), and 166-186 (EVSY…ILTH).

This sequence belongs to the PlsY family. In terms of assembly, probably interacts with PlsX.

Its subcellular location is the cell inner membrane. The enzyme catalyses an acyl phosphate + sn-glycerol 3-phosphate = a 1-acyl-sn-glycero-3-phosphate + phosphate. It participates in lipid metabolism; phospholipid metabolism. In terms of biological role, catalyzes the transfer of an acyl group from acyl-phosphate (acyl-PO(4)) to glycerol-3-phosphate (G3P) to form lysophosphatidic acid (LPA). This enzyme utilizes acyl-phosphate as fatty acyl donor, but not acyl-CoA or acyl-ACP. In Leptospira borgpetersenii serovar Hardjo-bovis (strain JB197), this protein is Glycerol-3-phosphate acyltransferase.